A 231-amino-acid chain; its full sequence is Orotate phosphoribosyltransferase (231 aa).

Residue Lys29 coordinates 5-phospho-alpha-D-ribose 1-diphosphate. 37 to 38 (FF) is a binding site for orotate. Residues 75-76 (YK), Arg107, Lys108, Lys111, His113, and 133-141 (DDVISRCTA) contribute to the 5-phospho-alpha-D-ribose 1-diphosphate site. 2 residues coordinate orotate: Ser137 and Arg165.

The protein belongs to the purine/pyrimidine phosphoribosyltransferase family. PyrE subfamily. In terms of assembly, homodimer.

It carries out the reaction orotidine 5'-phosphate + diphosphate = orotate + 5-phospho-alpha-D-ribose 1-diphosphate. It participates in pyrimidine metabolism; UMP biosynthesis via de novo pathway; UMP from orotate: step 1/2. Its function is as follows. Catalyzes the transfer of a ribosyl phosphate group from 5-phosphoribose 1-diphosphate to orotate, leading to the formation of orotidine monophosphate (OMP). The protein is Orotate phosphoribosyltransferase (URA5) of Podospora anserina (Pleurage anserina).